The chain runs to 356 residues: MFS-type transporter tazK (356 aa).

9 helical membrane passes run 12–32, 42–62, 69–89, 102–122, 178–198, 211–231, 257–277, 288–308, and 320–340; these read LPFF…ALGH, FLGG…LADF, GVAV…GAIT, MTAW…FIIL, ILLS…LLFV, GAID…VGAF, LHPM…FAWT, ILAG…SLAY, and AISG…LFAP.

Belongs to the major facilitator superfamily. CAR1 family.

It is found in the membrane. MFS-type transporter; part of the gene cluster that mediates the biosynthesis of azaterrilone A and other azaphilones, a class of fungal metabolites characterized by a highly oxygenated pyrano-quinone bicyclic core and exhibiting a broad range of bioactivities. The polypeptide is MFS-type transporter tazK (Aspergillus terreus (strain NIH 2624 / FGSC A1156)).